The following is a 198-amino-acid chain: MTPLSKIEALLFVAGEDGLSLRQLATLLDIPVTALLQQLEKMAQKYERDDNSALSLLESSKTYKLVTKKDYADLLRQYSKTPINQSLSRASLEVLSIIAYKQPITRIEVDNIRGVNSSSAISKLQAFDLIQEAGKKEVLGRPNLYVTSDYFLDYMGINSLEELPDASSIELKDEEFTLFDNKENEEQISENVKEENEN.

Belongs to the ScpB family. In terms of assembly, homodimer. Homodimerization may be required to stabilize the binding of ScpA to the Smc head domains. Component of a cohesin-like complex composed of ScpA, ScpB and the Smc homodimer, in which ScpA and ScpB bind to the head domain of Smc. The presence of the three proteins is required for the association of the complex with DNA.

Its subcellular location is the cytoplasm. Functionally, participates in chromosomal partition during cell division. May act via the formation of a condensin-like complex containing Smc and ScpA that pull DNA away from mid-cell into both cell halves. The protein is Segregation and condensation protein B of Streptococcus mutans serotype c (strain ATCC 700610 / UA159).